A 37-amino-acid chain; its full sequence is Large ribosomal subunit protein bL36c (37 aa).

It belongs to the bacterial ribosomal protein bL36 family.

It localises to the plastid. It is found in the chloroplast. The protein is Large ribosomal subunit protein bL36c of Psilotum nudum (Whisk fern).